The sequence spans 268 residues: Phosphatidylglycerol--prolipoprotein diacylglyceryl transferase (268 aa).

The next 7 helical transmembrane spans lie at Pro27–Leu47, Leu66–Tyr86, Gly104–Trp124, Phe130–Ile150, Pro181–Phe201, Val208–Thr228, and Phe242–Leu262. Arg149 is a binding site for a 1,2-diacyl-sn-glycero-3-phospho-(1'-sn-glycerol).

The protein belongs to the Lgt family.

It is found in the cell inner membrane. The catalysed reaction is L-cysteinyl-[prolipoprotein] + a 1,2-diacyl-sn-glycero-3-phospho-(1'-sn-glycerol) = an S-1,2-diacyl-sn-glyceryl-L-cysteinyl-[prolipoprotein] + sn-glycerol 1-phosphate + H(+). The protein operates within protein modification; lipoprotein biosynthesis (diacylglyceryl transfer). Functionally, catalyzes the transfer of the diacylglyceryl group from phosphatidylglycerol to the sulfhydryl group of the N-terminal cysteine of a prolipoprotein, the first step in the formation of mature lipoproteins. The sequence is that of Phosphatidylglycerol--prolipoprotein diacylglyceryl transferase from Shewanella sp. (strain ANA-3).